A 232-amino-acid chain; its full sequence is Large ribosomal subunit protein uL1 (232 aa).

This sequence belongs to the universal ribosomal protein uL1 family. Part of the 50S ribosomal subunit.

Its function is as follows. Binds directly to 23S rRNA. The L1 stalk is quite mobile in the ribosome, and is involved in E site tRNA release. Protein L1 is also a translational repressor protein, it controls the translation of the L11 operon by binding to its mRNA. The chain is Large ribosomal subunit protein uL1 from Azorhizobium caulinodans (strain ATCC 43989 / DSM 5975 / JCM 20966 / LMG 6465 / NBRC 14845 / NCIMB 13405 / ORS 571).